A 239-amino-acid polypeptide reads, in one-letter code: Geranylgeranylglyceryl phosphate synthase (239 aa).

Mg(2+) contacts are provided by aspartate 18 and serine 45. Sn-glycerol 1-phosphate-binding positions include 166 to 172, 197 to 198, and 219 to 220; these read YLEAGSG, GG, and GT.

It belongs to the GGGP/HepGP synthase family. Group II subfamily. Mg(2+) is required as a cofactor.

It localises to the cytoplasm. The catalysed reaction is sn-glycerol 1-phosphate + (2E,6E,10E)-geranylgeranyl diphosphate = sn-3-O-(geranylgeranyl)glycerol 1-phosphate + diphosphate. It participates in membrane lipid metabolism; glycerophospholipid metabolism. In terms of biological role, prenyltransferase that catalyzes the transfer of the geranylgeranyl moiety of geranylgeranyl diphosphate (GGPP) to the C3 hydroxyl of sn-glycerol-1-phosphate (G1P). This reaction is the first ether-bond-formation step in the biosynthesis of archaeal membrane lipids. The polypeptide is Geranylgeranylglyceryl phosphate synthase (Pyrobaculum aerophilum (strain ATCC 51768 / DSM 7523 / JCM 9630 / CIP 104966 / NBRC 100827 / IM2)).